The primary structure comprises 122 residues: NADH-quinone oxidoreductase subunit A (122 aa).

Helical transmembrane passes span 10-30, 67-87, and 91-111; these read LIVFVFLCLGVLLPIGALTIG, FALLFVIFDVETVFLYPWAVV, and LGLFALVEMIIFIVLLAIGLI.

This sequence belongs to the complex I subunit 3 family. As to quaternary structure, NDH-1 is composed of 14 different subunits. Subunits NuoA, H, J, K, L, M, N constitute the membrane sector of the complex.

It localises to the cell membrane. The catalysed reaction is a quinone + NADH + 5 H(+)(in) = a quinol + NAD(+) + 4 H(+)(out). In terms of biological role, NDH-1 shuttles electrons from NADH, via FMN and iron-sulfur (Fe-S) centers, to quinones in the respiratory chain. The immediate electron acceptor for the enzyme in this species is believed to be a menaquinone. Couples the redox reaction to proton translocation (for every two electrons transferred, four hydrogen ions are translocated across the cytoplasmic membrane), and thus conserves the redox energy in a proton gradient. This Geobacillus thermodenitrificans (strain NG80-2) protein is NADH-quinone oxidoreductase subunit A.